The primary structure comprises 145 residues: Trafficking protein particle complex subunit 1 (145 aa).

The protein belongs to the TRAPP small subunits family. BET5 subfamily. Part of the multisubunit transport protein particle (TRAPP) complex. The heterodimer TRAPPC6B-TRAPPC3 interacts with TRAPPC1 likely providing a core for TRAPP complex formation.

Its subcellular location is the golgi apparatus. It is found in the cis-Golgi network. The protein localises to the endoplasmic reticulum. In terms of biological role, may play a role in vesicular transport from endoplasmic reticulum to Golgi. The polypeptide is Trafficking protein particle complex subunit 1 (Mus musculus (Mouse)).